The primary structure comprises 449 residues: Protein phosphatase fem-2 (449 aa).

The tract at residues 28-34 (EEAFADE) is interaction with fem-1 and fem-3. The segment at 54 to 56 (IRF) is interaction with fem-3. The region spanning 160–424 (GIHVSGDQLK…DNVSVVIGFL (265 aa)) is the PPM-type phosphatase domain. Mg(2+)-binding residues include Asp-202, Gly-203, Asp-370, and Asp-415.

Belongs to the PP2C family. As to quaternary structure, component of a complex containing fem-1, fem-2 and fem-3. Interacts (via N-terminus) with fem-1 and fem-3. Component of the CBC(fem-1) E3 ubiquitin-protein ligase complex, at least composed of cul-2, elc-1, tra-1, fem-1, fem-2 and fem-3; mediates the ubiquitination and subsequent proteasomal degradation of tra-1. Interacts with tra-1. Interacts with sel-10. Mg(2+) serves as cofactor. Requires Mn(2+) as cofactor.

It catalyses the reaction O-phospho-L-seryl-[protein] + H2O = L-seryl-[protein] + phosphate. The enzyme catalyses O-phospho-L-threonyl-[protein] + H2O = L-threonyl-[protein] + phosphate. Functionally, dephosphorylates auto-phosphorylated Ca(2+)/calmodulin-dependent protein kinase unc-43/CAMKII in vitro. Involved in the regulation of sex determination. Together with fem-3, required for male sexual development by promoting the proteasomal-mediated degradation of tra-1, a transcription repressor of male-specific genes. Promotes apoptosis. In Caenorhabditis elegans, this protein is Protein phosphatase fem-2.